The following is a 306-amino-acid chain: Agmatinase (306 aa).

Histidine 126, aspartate 149, histidine 151, aspartate 153, aspartate 230, and aspartate 232 together coordinate Mn(2+).

The protein belongs to the arginase family. Agmatinase subfamily. It depends on Mn(2+) as a cofactor.

It catalyses the reaction agmatine + H2O = urea + putrescine. Its pathway is amine and polyamine biosynthesis; putrescine biosynthesis via agmatine pathway; putrescine from agmatine: step 1/1. Its function is as follows. Catalyzes the formation of putrescine from agmatine. The protein is Agmatinase of Enterobacter sp. (strain 638).